A 130-amino-acid chain; its full sequence is Putative ankyrin repeat protein R886 (130 aa).

3 ANK repeats span residues 21–50 (NYDR…DITA), 54–83 (YGFT…SIIK), and 85–113 (DNLT…DIRY).

The protein is Putative ankyrin repeat protein R886 of Acanthamoeba polyphaga (Amoeba).